An 81-amino-acid polypeptide reads, in one-letter code: Antimicrobial peptide D2 (81 aa).

An N-terminal signal peptide occupies residues 1 to 31 (MAKTVLGIHVTFLTLLFAVILLNDVMYTPVE). 4 disulfide bridges follow: C34-C81, C45-C66, C51-C75, and C55-C77.

Functionally, antimicrobial peptide probably active against fungi like B.sorokiniana, F.oxysporum, F.graminearum, F.avenaceum, B.cinerea, P.beta, P.infestans and P.debaryanum. This Stellaria media (Common chickweed) protein is Antimicrobial peptide D2.